The following is a 443-amino-acid chain: MMNHPHSSHIGTTNVKEEIGKLDRIRISGIGLVRYAFMAVLLIIAISTKTLPNTMIGAIFALVLMGHVFYYLGAHLPIFRSYLGGGSVFTILLTAILVATNVMPKYVVTTASGFINGMDFLGLYIVSLIASSLFKMDRKMLLKAAVRFLPVAFISMALTAVVIGIVGVIIGVGFNYAILYIAMPIMAGGVGAGIVPLSGIYAHAMGVGSAGILSKLFPTVILGNLLAIISAGLISRIFKDSKGNGHGEILRGEREDAAAAAEEIKPDYVQLGVGLIIAVMFFMIGTMLNKVFPGINAYAFIILSIVLTKAFGLLPKYYEDSVIMFGQVIVKNMTHALLAGVGLSLLDMHVLLAALSWQFVVLCLVSIVAISLISATLGKLFGLYPVEAAITAGLANNSMGGTGNVAVLAASERMNLIAFAQMGNRIGGALILVVAGILVTFMK.

Transmembrane regions (helical) follow at residues 27 to 47, 59 to 79, 83 to 103, 114 to 134, 151 to 171, 177 to 197, 209 to 229, 268 to 288, 294 to 314, 322 to 342, 350 to 370, 388 to 410, and 422 to 442; these read ISGIGLVRYAFMAVLLIIAIS, IFALVLMGHVFYYLGAHLPIF, LGGGSVFTILLTAILVATNVM, FINGMDFLGLYIVSLIASSLF, VAFISMALTAVVIGIVGVIIG, AILYIAMPIMAGGVGAGIVPL, SAGILSKLFPTVILGNLLAII, YVQLGVGLIIAVMFFMIGTML, GINAYAFIILSIVLTKAFGLL, VIMFGQVIVKNMTHALLAGVG, VLLAALSWQFVVLCLVSIVAI, AAITAGLANNSMGGTGNVAVLAA, and MGNRIGGALILVVAGILVTFM.

Belongs to the 2-hydroxycarboxylate transporter (2-HCT) (TC 2.A.24) family.

Its subcellular location is the cell membrane. The catalysed reaction is (R)-lactate(in) + citrate(out) = (R)-lactate(out) + citrate(in). It carries out the reaction (S)-lactate(in) + citrate(out) = (S)-lactate(out) + citrate(in). The enzyme catalyses citrate(in) + H(+)(in) = citrate(out) + H(+)(out). Its activity is regulated as follows. Uptake of citrate is not affected by the absence or presence of Na(+) up to 25 mM and is increasingly inhibited by increasing Mg(2+) concentrations. Functionally, secondary transporter involved in citrate metabolism. During cometabolism of citrate and glucose, catalyzes the uptake of divalent citrate into the cell coupled to the exit of monovalent lactate, a product of citrate fermentation during citrate-glucose cometabolism (precursor/product exchange). The citrate/lactate exchange is electrogenic and results in the generation of a membrane potential. In the absence of glucose, i.e. when no lactate is produced, CitP catalyzes the proton-dependent transport of citrate and malate. Transports the divalent form of citrate and malate with the concomitant uptake of one proton, therefore translocating a single unit of negative charge across the membrane. In vitro, transports a range of substrates that contain the 2-hydroxycarboxylate motif, HO-CR(2)-COO(-), with a preference for malate, citrate and monovalent 2-hydroxyisobutyrate. Modification of the OH or the COO(-) groups of the 2-hydroxycarboxylate motif drastically reduces the affinity of the transporter for the substrates, indicating their relevance in substrate recognition. Significant activity is also observed with some 2-oxocarboxylates and a 3-hydroxycarboxylate. This Leuconostoc mesenteroides subsp. mesenteroides protein is Citrate transporter CitP.